Consider the following 643-residue polypeptide: Pescadillo homolog (643 aa).

A compositionally biased stretch (basic and acidic residues) spans 305-323; that stretch reads EKTKEKNHKSDNNPHEHTT. Residues 305–329 are disordered; the sequence is EKTKEKNHKSDNNPHEHTTNIDNNN. In terms of domain architecture, BRCT spans 378–474; the sequence is KLKELFKNHI…NILPCSDYLT (97 aa). Residues 531–615 are a coiled coil; that stretch reads NYKEEEEEEN…IVLSKKKRKL (85 aa).

The protein belongs to the pescadillo family. As to quaternary structure, interacts with dual specificity protein phosphatase YVH1.

It is found in the nucleus. It localises to the nucleolus. The protein resides in the nucleoplasm. In terms of biological role, required for maturation of ribosomal RNAs and formation of the large ribosomal subunit. This is Pescadillo homolog from Plasmodium falciparum (isolate 3D7).